Here is a 554-residue protein sequence, read N- to C-terminus: Glucose-6-phosphate isomerase 1 (554 aa).

Glu-359 functions as the Proton donor in the catalytic mechanism. Residues His-390 and Lys-518 contribute to the active site.

This sequence belongs to the GPI family.

It is found in the cytoplasm. It carries out the reaction alpha-D-glucose 6-phosphate = beta-D-fructose 6-phosphate. The protein operates within carbohydrate biosynthesis; gluconeogenesis. Its pathway is carbohydrate degradation; glycolysis; D-glyceraldehyde 3-phosphate and glycerone phosphate from D-glucose: step 2/4. Its function is as follows. Catalyzes the reversible isomerization of glucose-6-phosphate to fructose-6-phosphate. In Pseudomonas putida (strain ATCC 47054 / DSM 6125 / CFBP 8728 / NCIMB 11950 / KT2440), this protein is Glucose-6-phosphate isomerase 1.